The primary structure comprises 1492 residues: DNA-directed RNA polymerase subunit beta' (1492 aa).

Zn(2+) is bound by residues cysteine 67, cysteine 69, cysteine 82, and cysteine 85. Residues aspartate 499, aspartate 501, and aspartate 503 each coordinate Mg(2+). Cysteine 867, cysteine 943, cysteine 950, and cysteine 953 together coordinate Zn(2+).

This sequence belongs to the RNA polymerase beta' chain family. In terms of assembly, the RNAP catalytic core consists of 2 alpha, 1 beta, 1 beta' and 1 omega subunit. When a sigma factor is associated with the core the holoenzyme is formed, which can initiate transcription. The cofactor is Mg(2+). Requires Zn(2+) as cofactor.

The enzyme catalyses RNA(n) + a ribonucleoside 5'-triphosphate = RNA(n+1) + diphosphate. DNA-dependent RNA polymerase catalyzes the transcription of DNA into RNA using the four ribonucleoside triphosphates as substrates. The polypeptide is DNA-directed RNA polymerase subunit beta' (Chlorobium phaeobacteroides (strain DSM 266 / SMG 266 / 2430)).